Consider the following 218-residue polypeptide: MFYSHLLFFTFTFACSSSLNRKTKREMDLKDIILDTCHQNAACAHIQMHLKETYVDELCKCGRGEECPIHWDPNDGHSITQAYNQWKFCSPISQDLPVCTREQTAREFSYEMNPVSKKVQMFMFFNCLCPENHFYEFFNEREETGGGQLAIIEERCEKVKQCEKTQICQKIETFQGKFLFKHVKCFCPGNQNCNDDLKKADATNVGDDGSVQHYMKCH.

The first 16 residues, 1–16 (MFYSHLLFFTFTFACS), serve as a signal peptide directing secretion. Residues 17 to 25 (SSLNRKTKR) constitute a propeptide that is removed on maturation.

Contains 8 disulfide bonds. In terms of tissue distribution, expressed by the venom gland.

The protein localises to the secreted. Functionally, voltage-gated potassium channel inhibitor. The sequence is that of Kappa-scoloptoxin(11)-Ssd1b from Scolopendra dehaani (Thai centipede).